A 370-amino-acid chain; its full sequence is Binary larvicide subunit BinA (370 aa).

The propeptide occupies 1 to 6 (MRNLDF). The beta-trefoil domain stretch occupies residues 1-155 (MRNLDFIDSF…LISNKEQIYL (155 aa)). A disulfide bridge links Cys-31 with Cys-47. The interval 156-370 (TLPSLPENEQ…NTKIITDDQN (215 aa)) is pore-forming domain.

This sequence belongs to the toxin_10 family. In terms of assembly, forms a heterodimer with BinB. Post-translationally, processed by proteases in the mosquito gut, probably at both the N- and C-termini.

Its subcellular location is the spore. The protein localises to the perispore. Its function is as follows. Component of a binary toxin active against Culex and some Aedes mosquito larvae; mortality towards both C.quinquefasciatus and A.atropalpus is maximal by 48 hours. A.aegypti is not very susceptible to this toxin. Binary toxin internalization into host gut cells requires both proteins. In Lysinibacillus sphaericus (Bacillus sphaericus), this protein is Binary larvicide subunit BinA (binA).